A 260-amino-acid chain; its full sequence is Exosome complex component Rrp42 (260 aa).

Belongs to the RNase PH family. Rrp42 subfamily. Component of the archaeal exosome complex. Forms a hexameric ring-like arrangement composed of 3 Rrp41-Rrp42 heterodimers. The hexameric ring associates with a trimer of Rrp4 and/or Csl4 subunits.

It localises to the cytoplasm. Its function is as follows. Non-catalytic component of the exosome, which is a complex involved in RNA degradation. Contributes to the structuring of the Rrp41 active site. This chain is Exosome complex component Rrp42, found in Thermoplasma volcanium (strain ATCC 51530 / DSM 4299 / JCM 9571 / NBRC 15438 / GSS1).